The following is a 718-amino-acid chain: Adhesin-like cell surface protein MAD1 (718 aa).

Positions 1 to 19 (MKGAIQFLGALAAVQAVSA) are cleaved as a signal peptide. A run of 9 repeats spans residues 217-243 (PCTE…TEPA), 244-265 (PCTE…TEPA), 266-282 (PCTE…TEPA), 283-309 (PCTE…TEPA), 310-336 (PCTE…TEPA), 337-358 (PCTE…TEPA), 359-382 (PCTE…TDEA), 383-402 (PCTD…TDEA), and 403-420 (PCTE…AVPT). The segment at 452–472 (TSIPYETPSPSETETLPPSGT) is disordered. The CFEM domain maps to 462–575 (SETETLPPSG…VTLPPVTTGA (114 aa)). Intrachain disulfides connect cysteine 494-cysteine 526, cysteine 504-cysteine 512, and cysteine 514-cysteine 548. Aspartate 509 contacts heme. Glycine 693 carries the GPI-anchor amidated glycine lipid modification. Residues 694-718 (AASSFKAFSTVMLAGVIGLTALIMA) constitute a propeptide, removed in mature form.

Belongs to the RBT5 family. In terms of processing, the GPI-anchor is attached to the protein in the endoplasmic reticulum and serves to target the protein to the cell surface. There, the glucosamine-inositol phospholipid moiety is cleaved off and the GPI-modified mannoprotein is covalently attached via its lipidless GPI glycan remnant to the 1,6-beta-glucan of the outer cell wall layer.

Its subcellular location is the secreted. It is found in the cell wall. It localises to the cell membrane. In terms of biological role, cell surface adhesion protein that plays a key role in switching between the saprophytic lifestyle and the predacious lifestyle (nematode trapping). Likely functions to prevent energy-consuming trap formation in the absence of nematodes, and keeps the fungus in the saprophytic life style. May influence the induction signal of trap formation by limiting the porosity of the cell wall and thus affecting its permeability of nitrogen source. The protein is Adhesin-like cell surface protein MAD1 of Arthrobotrys oligospora (strain ATCC 24927 / CBS 115.81 / DSM 1491) (Nematode-trapping fungus).